The following is a 213-amino-acid chain: Urease accessory protein UreG (213 aa).

Residue 10-17 (GPVGSGKT) coordinates GTP.

Belongs to the SIMIBI class G3E GTPase family. UreG subfamily. Homodimer. UreD, UreF and UreG form a complex that acts as a GTP-hydrolysis-dependent molecular chaperone, activating the urease apoprotein by helping to assemble the nickel containing metallocenter of UreC. The UreE protein probably delivers the nickel.

It is found in the cytoplasm. Functionally, facilitates the functional incorporation of the urease nickel metallocenter. This process requires GTP hydrolysis, probably effectuated by UreG. This Deinococcus radiodurans (strain ATCC 13939 / DSM 20539 / JCM 16871 / CCUG 27074 / LMG 4051 / NBRC 15346 / NCIMB 9279 / VKM B-1422 / R1) protein is Urease accessory protein UreG.